The chain runs to 229 residues: Large ribosomal subunit protein uL1 (229 aa).

It belongs to the universal ribosomal protein uL1 family. Part of the 50S ribosomal subunit.

Its function is as follows. Binds directly to 23S rRNA. The L1 stalk is quite mobile in the ribosome, and is involved in E site tRNA release. Functionally, protein L1 is also a translational repressor protein, it controls the translation of the L11 operon by binding to its mRNA. The sequence is that of Large ribosomal subunit protein uL1 from Streptococcus pneumoniae (strain Taiwan19F-14).